A 304-amino-acid polypeptide reads, in one-letter code: Putative metal ion transporter ZIPCO (304 aa).

8 consecutive transmembrane segments (helical) span residues 1 to 21 (MWLK…VIYL), 46 to 66 (VASG…VIGL), 74 to 94 (IYCC…TDIL), 158 to 178 (FFIV…IGSL), 183 to 203 (PIII…LMIY), 218 to 238 (IYAW…VLSF), 243 to 263 (FVEI…SFNM), and 275 to 295 (FYIS…MIVF).

Its subcellular location is the cell membrane. Functionally, putative transporter for the divalent zinc and iron cations. Required for the development of liver-stage parasites. This chain is Putative metal ion transporter ZIPCO, found in Plasmodium berghei (strain Anka).